The chain runs to 171 residues: Pro-corazonin (171 aa).

An N-terminal signal peptide occupies residues Met1–Ala20. Residue Gln21 is modified to Pyrrolidone carboxylic acid. Asparagine amide is present on Asn31. Positions Phe82–Ala171 are excised as a propeptide.

This sequence belongs to the corazonin family.

The protein localises to the secreted. Cardioactive peptide. Corazonin is probably involved in the physiological regulation of the heart beat. The protein is Pro-corazonin of Anopheles gambiae (African malaria mosquito).